Reading from the N-terminus, the 293-residue chain is MASITLTPSEKDIQAFLEHYQTSLAPSKNPYIRYFLKLPQATVSIYTSGKILLQGEGAEKYASFFGYQAVEQTSGQNLPLIGTDEVGNGSYFGGLAVVATFVTPDQHDFLRKLGVGDSKTLTDQKIRQITPILKEKIQHQALLLSPSKYNEVIGDRYNAVSVKVALHNQAIYLLLQKGVQPEKIVIDAFTSAKNYDKYLAQEANRFSNPISLEEKAEGKYLSVAVSSVIARDLFLENLENLGRELGYQLPSGAGTASDKVASQILQAYGMQGLSFCAKLHFKNTEKAKKRLER.

One can recognise an RNase H type-2 domain in the interval 78–293 (LPLIGTDEVG…TEKAKKRLER (216 aa)). Residues D84, E85, and D187 each coordinate a divalent metal cation.

The protein belongs to the RNase HII family. RnhC subfamily. It depends on Mn(2+) as a cofactor. The cofactor is Mg(2+).

Its subcellular location is the cytoplasm. The enzyme catalyses Endonucleolytic cleavage to 5'-phosphomonoester.. Functionally, endonuclease that specifically degrades the RNA of RNA-DNA hybrids. This Streptococcus pneumoniae (strain 70585) protein is Ribonuclease HIII.